Reading from the N-terminus, the 522-residue chain is Wax ester synthase/diacylglycerol acyltransferase 4 (522 aa).

The span at 1 to 12 shows a compositional bias: basic and acidic residues; it reads MEIETRPHISGD. The disordered stretch occupies residues 1 to 20; that stretch reads MEIETRPHISGDEKEEEQPL. At 1–205 the chain is on the cytoplasmic side; it reads MEIETRPHIS…SDSRLLWLVK (205 aa). His-149 (proton acceptor) is an active-site residue. The chain crosses the membrane as a helical span at residues 206–226; sequence VIWTAVILGLNTVCDALEFIV. The Lumenal portion of the chain corresponds to 227 to 522; sequence TTLFVKDTET…QIAGLLYRML (296 aa). N-linked (GlcNAc...) asparagine glycans are attached at residues Asn-270 and Asn-409.

In the N-terminal section; belongs to the long-chain O-acyltransferase family. Mostly expressed in roots, flowers and siliques.

The protein localises to the cell membrane. The protein resides in the endoplasmic reticulum membrane. The catalysed reaction is an acyl-CoA + a 1,2-diacyl-sn-glycerol = a triacyl-sn-glycerol + CoA. It catalyses the reaction a long chain fatty alcohol + a fatty acyl-CoA = a wax ester + CoA. It functions in the pathway glycerolipid metabolism; triacylglycerol biosynthesis. It participates in lipid metabolism. In terms of biological role, bifunctional wax ester synthase/diacylglycerol acyltransferase. Involved in cuticular wax biosynthesis. This chain is Wax ester synthase/diacylglycerol acyltransferase 4, found in Arabidopsis thaliana (Mouse-ear cress).